Reading from the N-terminus, the 353-residue chain is Quinolinate synthase (353 aa).

2 residues coordinate iminosuccinate: H47 and S68. C113 contributes to the [4Fe-4S] cluster binding site. Residues 139 to 141 (YAN) and S156 contribute to the iminosuccinate site. C200 lines the [4Fe-4S] cluster pocket. Iminosuccinate is bound by residues 226 to 228 (HPE) and T243. Residue C297 participates in [4Fe-4S] cluster binding.

This sequence belongs to the quinolinate synthase family. Type 1 subfamily. [4Fe-4S] cluster serves as cofactor.

Its subcellular location is the cytoplasm. The catalysed reaction is iminosuccinate + dihydroxyacetone phosphate = quinolinate + phosphate + 2 H2O + H(+). It functions in the pathway cofactor biosynthesis; NAD(+) biosynthesis; quinolinate from iminoaspartate: step 1/1. Catalyzes the condensation of iminoaspartate with dihydroxyacetone phosphate to form quinolinate. The protein is Quinolinate synthase of Pectobacterium atrosepticum (strain SCRI 1043 / ATCC BAA-672) (Erwinia carotovora subsp. atroseptica).